The primary structure comprises 192 residues: Thymidine kinase (192 aa).

ATP contacts are provided by residues 9–16 (SAMNAGKS) and 87–90 (DECQ). Glu-88 functions as the Proton acceptor in the catalytic mechanism. Residues Cys-145, Cys-147, Cys-182, and His-185 each contribute to the Zn(2+) site.

This sequence belongs to the thymidine kinase family. In terms of assembly, homotetramer.

The protein localises to the cytoplasm. The catalysed reaction is thymidine + ATP = dTMP + ADP + H(+). In Shewanella oneidensis (strain ATCC 700550 / JCM 31522 / CIP 106686 / LMG 19005 / NCIMB 14063 / MR-1), this protein is Thymidine kinase.